A 26-amino-acid chain; its full sequence is Fumarylacetoacetate hydrolase domain-containing protein 2A (26 aa).

Belongs to the FAH family. It depends on Ca(2+) as a cofactor. Mg(2+) is required as a cofactor.

Its function is as follows. May have hydrolase activity. The chain is Fumarylacetoacetate hydrolase domain-containing protein 2A from Mesocricetus auratus (Golden hamster).